A 432-amino-acid chain; its full sequence is Adenylosuccinate synthetase (432 aa).

GTP is bound by residues 13 to 19 (GDEGKGK) and 41 to 43 (GHT). Asp14 serves as the catalytic Proton acceptor. The Mg(2+) site is built by Asp14 and Gly41. IMP is bound by residues 14–17 (DEGK), 39–42 (NAGH), Thr130, Arg144, Gln225, Thr240, and Arg304. His42 serves as the catalytic Proton donor. Position 300-306 (300-306 (ATTGRRR)) interacts with substrate. GTP is bound by residues Arg306, 332–334 (KLD), and 415–417 (STG).

This sequence belongs to the adenylosuccinate synthetase family. As to quaternary structure, homodimer. The cofactor is Mg(2+).

The protein resides in the cytoplasm. The enzyme catalyses IMP + L-aspartate + GTP = N(6)-(1,2-dicarboxyethyl)-AMP + GDP + phosphate + 2 H(+). The protein operates within purine metabolism; AMP biosynthesis via de novo pathway; AMP from IMP: step 1/2. Its function is as follows. Plays an important role in the de novo pathway of purine nucleotide biosynthesis. Catalyzes the first committed step in the biosynthesis of AMP from IMP. The polypeptide is Adenylosuccinate synthetase (Pectobacterium atrosepticum (strain SCRI 1043 / ATCC BAA-672) (Erwinia carotovora subsp. atroseptica)).